An 85-amino-acid chain; its full sequence is Large ribosomal subunit protein bL31 (85 aa).

A disordered region spans residues 64-85; the sequence is KYGMSESQGAGGKGNAKKKDEK.

It belongs to the bacterial ribosomal protein bL31 family. Type A subfamily. As to quaternary structure, part of the 50S ribosomal subunit.

Functionally, binds the 23S rRNA. This is Large ribosomal subunit protein bL31 from Acaryochloris marina (strain MBIC 11017).